The primary structure comprises 597 residues: Kelch-like protein 21 (597 aa).

The BTB domain occupies 35–103 (LDVTLEAAGG…SYTGRVAVSG (69 aa)). Residues 138 to 239 (CLDMQDFAEA…RRFYLLAHVE (102 aa)) form the BACK domain. 6 Kelch repeats span residues 287–335 (ILVL…ALGN), 336–382 (DIYV…VLDG), 384–422 (LYVV…ACRG), 423–470 (RLYA…TLNG), 472–512 (MYFV…VLGG), and 513–560 (KLYV…SIFR). Positions 570 to 597 (GRGFELNSGSNDVDAGYHRLPQNPEELH) are disordered.

As to quaternary structure, component of the BCR(KLHL21) E3 ubiquitin ligase complex, at least composed of CUL3, KLHL21 and RBX1.

It is found in the cytoplasm. It localises to the cytoskeleton. The protein localises to the spindle. Its pathway is protein modification; protein ubiquitination. Its function is as follows. Substrate-specific adapter of a BCR (BTB-CUL3-RBX1) E3 ubiquitin-protein ligase complex required for efficient chromosome alignment and cytokinesis. The BCR(KLHL21) E3 ubiquitin ligase complex regulates localization of the chromosomal passenger complex (CPC) from chromosomes to the spindle midzone in anaphase and mediates the ubiquitination of AURKB. Ubiquitination of AURKB by BCR(KLHL21) E3 ubiquitin ligase complex may not lead to its degradation by the proteasome. The sequence is that of Kelch-like protein 21 (Klhl21) from Mus musculus (Mouse).